Here is a 200-residue protein sequence, read N- to C-terminus: Probable nicotinate-nucleotide adenylyltransferase (200 aa).

Belongs to the NadD family.

It catalyses the reaction nicotinate beta-D-ribonucleotide + ATP + H(+) = deamido-NAD(+) + diphosphate. It functions in the pathway cofactor biosynthesis; NAD(+) biosynthesis; deamido-NAD(+) from nicotinate D-ribonucleotide: step 1/1. Its function is as follows. Catalyzes the reversible adenylation of nicotinate mononucleotide (NaMN) to nicotinic acid adenine dinucleotide (NaAD). The polypeptide is Probable nicotinate-nucleotide adenylyltransferase (Clavibacter sepedonicus (Clavibacter michiganensis subsp. sepedonicus)).